The chain runs to 185 residues: UPF0301 protein IL2218 (185 aa).

It belongs to the UPF0301 (AlgH) family.

This chain is UPF0301 protein IL2218, found in Idiomarina loihiensis (strain ATCC BAA-735 / DSM 15497 / L2-TR).